A 237-amino-acid polypeptide reads, in one-letter code: Ribosomal RNA small subunit methyltransferase G (237 aa).

S-adenosyl-L-methionine contacts are provided by residues Gly-78, Phe-83, 129–130 (AE), and Arg-148. Residues 218 to 237 (KKETPNKYPRKAGMPNKRPL) are disordered.

Belongs to the methyltransferase superfamily. RNA methyltransferase RsmG family.

The protein localises to the cytoplasm. Its function is as follows. Specifically methylates the N7 position of a guanine in 16S rRNA. The protein is Ribosomal RNA small subunit methyltransferase G of Streptococcus pneumoniae (strain ATCC BAA-255 / R6).